The following is a 258-amino-acid chain: UPF0246 protein YaaA (258 aa).

It belongs to the UPF0246 family.

In Escherichia coli O17:K52:H18 (strain UMN026 / ExPEC), this protein is UPF0246 protein YaaA.